A 713-amino-acid polypeptide reads, in one-letter code: Constitutive lysine decarboxylase (713 aa).

N6-(pyridoxal phosphate)lysine is present on lysine 367.

The protein belongs to the Orn/Lys/Arg decarboxylase class-I family. In terms of assembly, homodecamer; built of five dimers associated in a 5-fold symmetrical double-ring. Requires pyridoxal 5'-phosphate as cofactor.

The catalysed reaction is L-lysine + H(+) = cadaverine + CO2. In terms of biological role, plays a role in lysine utilization by acting as a lysine decarboxylase. This is Constitutive lysine decarboxylase (ldcC) from Escherichia coli (strain K12).